A 371-amino-acid chain; its full sequence is Isopentenyl-diphosphate delta-isomerase (371 aa).

Residue 9-10 coordinates substrate; sequence RK. FMN-binding positions include Thr66, 67–69, Ser100, and Asn128; that span reads GMT. 100–102 contributes to the substrate binding site; it reads SQR. Gln167 contacts substrate. Glu168 serves as a coordination point for Mg(2+). FMN is bound by residues Lys199, Ser224, Thr229, 278–280, and 299–300; these read GMR and AL.

It belongs to the IPP isomerase type 2 family. Homooctamer. Dimer of tetramers. The cofactor is FMN. Requires NADPH as cofactor. Mg(2+) serves as cofactor.

The protein localises to the cytoplasm. The enzyme catalyses isopentenyl diphosphate = dimethylallyl diphosphate. In terms of biological role, involved in the biosynthesis of isoprenoids. Catalyzes the 1,3-allylic rearrangement of the homoallylic substrate isopentenyl (IPP) to its allylic isomer, dimethylallyl diphosphate (DMAPP). The protein is Isopentenyl-diphosphate delta-isomerase of Pyrococcus horikoshii (strain ATCC 700860 / DSM 12428 / JCM 9974 / NBRC 100139 / OT-3).